Here is a 77-residue protein sequence, read N- to C-terminus: U8-lycotoxin-Ls1v (77 aa).

Positions 1 to 20 (MKLIIFTGLVLFGIVSLIEA) are cleaved as a signal peptide. The propeptide occupies 21 to 26 (QAENEK).

It belongs to the neurotoxin 19 (CSTX) family. 08 (U8-Lctx) subfamily. Post-translationally, contains 4 disulfide bonds. As to expression, expressed by the venom gland.

It localises to the secreted. This Lycosa singoriensis (Wolf spider) protein is U8-lycotoxin-Ls1v.